A 486-amino-acid polypeptide reads, in one-letter code: 6-phosphogluconate dehydrogenase, decarboxylating 2 (486 aa).

NADP(+) is bound by residues 12-17 (GLAVMG), 35-37 (NRT), 79-81 (VKA), and Asn107. Substrate is bound by residues Asn107 and 133–135 (SGG). Lys188 (proton acceptor) is an active-site residue. 191-192 (HN) provides a ligand contact to substrate. The active-site Proton donor is the Glu195. 5 residues coordinate substrate: Tyr196, Lys266, Arg293, Arg456, and His462. The Microbody targeting signal motif lies at 484–486 (SKI).

It belongs to the 6-phosphogluconate dehydrogenase family. Forms homodimer. Forms heterodimers with PGD1 or PGD3.

Its subcellular location is the cytoplasm. It localises to the cytosol. The protein localises to the peroxisome. It carries out the reaction 6-phospho-D-gluconate + NADP(+) = D-ribulose 5-phosphate + CO2 + NADPH. It functions in the pathway carbohydrate degradation; pentose phosphate pathway; D-ribulose 5-phosphate from D-glucose 6-phosphate (oxidative stage): step 3/3. Its function is as follows. Catalyzes the oxidative decarboxylation of 6-phosphogluconate to ribulose 5-phosphate and CO(2), with concomitant reduction of NADP to NADPH. Required for guided growth of the male gametophytes and interaction between the pollen tube and the ovule. The chain is 6-phosphogluconate dehydrogenase, decarboxylating 2 from Arabidopsis thaliana (Mouse-ear cress).